The sequence spans 266 residues: Small ribosomal subunit protein mS42 (266 aa).

This sequence belongs to the mitochondrion-specific ribosomal protein mS42 family. Component of the mitochondrial small ribosomal subunit (mt-SSU). Mature yeast 74S mitochondrial ribosomes consist of a small (37S) and a large (54S) subunit. The 37S small subunit contains a 15S ribosomal RNA (15S mt-rRNA) and 34 different proteins. The 54S large subunit contains a 21S rRNA (21S mt-rRNA) and 46 different proteins. mS42 forms a heterodimer with mS43, building a large protuberance adjacent to the mRNA channel exit in the mt-SSU body.

It localises to the mitochondrion. Its function is as follows. Component of the mitochondrial ribosome (mitoribosome), a dedicated translation machinery responsible for the synthesis of mitochondrial genome-encoded proteins, including at least some of the essential transmembrane subunits of the mitochondrial respiratory chain. The mitoribosomes are attached to the mitochondrial inner membrane and translation products are cotranslationally integrated into the membrane. The chain is Small ribosomal subunit protein mS42 (RSM26) from Saccharomyces cerevisiae (strain ATCC 204508 / S288c) (Baker's yeast).